The sequence spans 513 residues: ATP synthase subunit alpha (513 aa).

169–176 is a binding site for ATP; that stretch reads GDRQTGKT.

The protein belongs to the ATPase alpha/beta chains family. As to quaternary structure, F-type ATPases have 2 components, CF(1) - the catalytic core - and CF(0) - the membrane proton channel. CF(1) has five subunits: alpha(3), beta(3), gamma(1), delta(1), epsilon(1). CF(0) has three main subunits: a(1), b(2) and c(9-12). The alpha and beta chains form an alternating ring which encloses part of the gamma chain. CF(1) is attached to CF(0) by a central stalk formed by the gamma and epsilon chains, while a peripheral stalk is formed by the delta and b chains.

It is found in the cell inner membrane. The enzyme catalyses ATP + H2O + 4 H(+)(in) = ADP + phosphate + 5 H(+)(out). Produces ATP from ADP in the presence of a proton gradient across the membrane. The alpha chain is a regulatory subunit. The protein is ATP synthase subunit alpha of Bordetella avium (strain 197N).